The primary structure comprises 562 residues: NAD-dependent malic enzyme (562 aa).

Residue Tyr-101 is the Proton donor of the active site. NAD(+) is bound at residue Arg-154. The Proton acceptor role is filled by Lys-172. The a divalent metal cation site is built by Glu-243, Asp-244, and Asp-267. NAD(+) contacts are provided by Asp-267 and Asn-415.

Belongs to the malic enzymes family. Homotetramer. It depends on Mg(2+) as a cofactor. Mn(2+) serves as cofactor.

It carries out the reaction (S)-malate + NAD(+) = pyruvate + CO2 + NADH. The catalysed reaction is oxaloacetate + H(+) = pyruvate + CO2. This chain is NAD-dependent malic enzyme, found in Shewanella pealeana (strain ATCC 700345 / ANG-SQ1).